Here is a 129-residue protein sequence, read N- to C-terminus: Ribonuclease P protein component (129 aa).

The protein belongs to the RnpA family. Consists of a catalytic RNA component (M1 or rnpB) and a protein subunit.

It carries out the reaction Endonucleolytic cleavage of RNA, removing 5'-extranucleotides from tRNA precursor.. Its function is as follows. RNaseP catalyzes the removal of the 5'-leader sequence from pre-tRNA to produce the mature 5'-terminus. It can also cleave other RNA substrates such as 4.5S RNA. The protein component plays an auxiliary but essential role in vivo by binding to the 5'-leader sequence and broadening the substrate specificity of the ribozyme. The polypeptide is Ribonuclease P protein component (Corynebacterium jeikeium (strain K411)).